The following is a 435-amino-acid chain: Putative F-box/kelch-repeat protein At1g20790 (435 aa).

Positions 1 to 49 (MKRLPLHLLDEILFNLDPKSLGKMRCTNKSINTHISDDPNFKFEYFSRI) constitute an F-box domain. 2 Kelch repeats span residues 192 to 238 (PVYV…CTGD) and 280 to 335 (LYWN…LFKP).

The chain is Putative F-box/kelch-repeat protein At1g20790 from Arabidopsis thaliana (Mouse-ear cress).